We begin with the raw amino-acid sequence, 336 residues long: MRIGILTSGGDCPGINATIRGVCKTAINHYGMEVIGIHSGFQGLLTKDIESFTDKSLSGLLNQGGTMLGTSREKPFKKGGVVSDVDKPALILQNIQEMGLDCVVCIGGNGTQKTAAKFAAMGVNIVSVPKTIDNDIWGTDISFGFDSAVSIATDAIDRLHSTASSHKRVMVIEVMGHKAGWIALYSGMAGGGDVILVPEIPYNIKNIGNTILERLKKGKPYSIVVVAEGILTDGRKRAAEYIAQEIEYETGIETRETVLGYIQRGGSPTPFDRNLSTRMGGHATELIANGQFGRMIALKGDDISSIPLEEVAGKLKLVTEDHDLVIQGRRMGICFG.

ATP-binding positions include glycine 10, 72–73, and 108–111; these read RE and GNGT. Residue asparagine 109 coordinates Mg(2+). Residues 131 to 133, arginine 168, 175 to 177, glutamate 228, arginine 255, and 261 to 264 each bind substrate; these read TID, MGH, and YIQR. Aspartate 133 (proton acceptor) is an active-site residue.

This sequence belongs to the phosphofructokinase type A (PFKA) family. Mixed-substrate PFK group III subfamily. In terms of assembly, homodimer or homotetramer. Mg(2+) serves as cofactor.

It is found in the cytoplasm. The enzyme catalyses beta-D-fructose 6-phosphate + ATP = beta-D-fructose 1,6-bisphosphate + ADP + H(+). It functions in the pathway carbohydrate degradation; glycolysis; D-glyceraldehyde 3-phosphate and glycerone phosphate from D-glucose: step 3/4. Its function is as follows. Catalyzes the phosphorylation of D-fructose 6-phosphate to fructose 1,6-bisphosphate by ATP, the first committing step of glycolysis. This chain is ATP-dependent 6-phosphofructokinase 3, found in Bacteroides thetaiotaomicron (strain ATCC 29148 / DSM 2079 / JCM 5827 / CCUG 10774 / NCTC 10582 / VPI-5482 / E50).